The following is a 478-amino-acid chain: Protein nucleotidyltransferase YdiU (478 aa).

Residues G84, G86, R87, K107, D119, G120, R170, and R177 each coordinate ATP. D246 functions as the Proton acceptor in the catalytic mechanism. 2 residues coordinate Mg(2+): N247 and D256. Position 256 (D256) interacts with ATP.

Belongs to the SELO family. Mg(2+) serves as cofactor. Requires Mn(2+) as cofactor.

It catalyses the reaction L-seryl-[protein] + ATP = 3-O-(5'-adenylyl)-L-seryl-[protein] + diphosphate. It carries out the reaction L-threonyl-[protein] + ATP = 3-O-(5'-adenylyl)-L-threonyl-[protein] + diphosphate. The enzyme catalyses L-tyrosyl-[protein] + ATP = O-(5'-adenylyl)-L-tyrosyl-[protein] + diphosphate. The catalysed reaction is L-histidyl-[protein] + UTP = N(tele)-(5'-uridylyl)-L-histidyl-[protein] + diphosphate. It catalyses the reaction L-seryl-[protein] + UTP = O-(5'-uridylyl)-L-seryl-[protein] + diphosphate. It carries out the reaction L-tyrosyl-[protein] + UTP = O-(5'-uridylyl)-L-tyrosyl-[protein] + diphosphate. Nucleotidyltransferase involved in the post-translational modification of proteins. It can catalyze the addition of adenosine monophosphate (AMP) or uridine monophosphate (UMP) to a protein, resulting in modifications known as AMPylation and UMPylation. The sequence is that of Protein nucleotidyltransferase YdiU from Escherichia coli O1:K1 / APEC.